Reading from the N-terminus, the 456-residue chain is Bifunctional protein GlmU (456 aa).

A pyrophosphorylase region spans residues 1–230 (MDKRFAVVLA…FQETLGVNDR (230 aa)). UDP-N-acetyl-alpha-D-glucosamine is bound by residues 9-12 (LAAG), K23, Q73, and 78-79 (GT). D103 contributes to the Mg(2+) binding site. Residues G140, E155, N170, and N228 each contribute to the UDP-N-acetyl-alpha-D-glucosamine site. N228 serves as a coordination point for Mg(2+). Residues 231–251 (VALSQAEQFMKERINKRHMQN) are linker. Positions 252–456 (GVTLIDPMNT…DDYVKNIHKK (205 aa)) are N-acetyltransferase. Residues R333 and K351 each contribute to the UDP-N-acetyl-alpha-D-glucosamine site. H363 serves as the catalytic Proton acceptor. UDP-N-acetyl-alpha-D-glucosamine is bound by residues Y366 and N377. Residues 386–387 (NY), A423, and R440 each bind acetyl-CoA.

The protein in the N-terminal section; belongs to the N-acetylglucosamine-1-phosphate uridyltransferase family. This sequence in the C-terminal section; belongs to the transferase hexapeptide repeat family. In terms of assembly, homotrimer. Requires Mg(2+) as cofactor.

It is found in the cytoplasm. The catalysed reaction is alpha-D-glucosamine 1-phosphate + acetyl-CoA = N-acetyl-alpha-D-glucosamine 1-phosphate + CoA + H(+). The enzyme catalyses N-acetyl-alpha-D-glucosamine 1-phosphate + UTP + H(+) = UDP-N-acetyl-alpha-D-glucosamine + diphosphate. It participates in nucleotide-sugar biosynthesis; UDP-N-acetyl-alpha-D-glucosamine biosynthesis; N-acetyl-alpha-D-glucosamine 1-phosphate from alpha-D-glucosamine 6-phosphate (route II): step 2/2. It functions in the pathway nucleotide-sugar biosynthesis; UDP-N-acetyl-alpha-D-glucosamine biosynthesis; UDP-N-acetyl-alpha-D-glucosamine from N-acetyl-alpha-D-glucosamine 1-phosphate: step 1/1. Its pathway is bacterial outer membrane biogenesis; LPS lipid A biosynthesis. Catalyzes the last two sequential reactions in the de novo biosynthetic pathway for UDP-N-acetylglucosamine (UDP-GlcNAc). The C-terminal domain catalyzes the transfer of acetyl group from acetyl coenzyme A to glucosamine-1-phosphate (GlcN-1-P) to produce N-acetylglucosamine-1-phosphate (GlcNAc-1-P), which is converted into UDP-GlcNAc by the transfer of uridine 5-monophosphate (from uridine 5-triphosphate), a reaction catalyzed by the N-terminal domain. This is Bifunctional protein GlmU from Bacillus subtilis (strain 168).